A 404-amino-acid chain; its full sequence is MKIIVQKFGGTSVKDDKGRKLALGHIKEAISEGYKVVVVVSAMGRKGDPYATDSLLGLLYGDQSAISPREQDLLLSCGETISSVVFTSMLLDNGVKAAALTGAQAGFLTNDQHTNAKIIEMKPERLFSVLANHDAVVVAGFQGATEKGDTTTIGRGGSDTSAAALGAAVDAEYIDIFTDVEGVMTADPRVVENAKPLPVVTYTEICNLAYQGAKVISPRAVEIAMQAKVPIRVRSTYSNDKGTLVTSHHSSKVGSDVFERLITGIAHVKDVTQFKVPAKIGQYNVQTEVFKAMANAGISVDFFNITPSEIVYTVAGNKTETAQRILMDMGYDPMVTRNCAKVSAVGAGIMGVPGVTSKIVSALSEKEIPILQSADSHTTIWVLVHEADMVPAVNALHEVFELSK.

7–10 (KFGG) is a binding site for ATP. 25–30 (HIKEAI) lines the substrate pocket. Ser41 contacts ATP. Residues 52–54 (TDS), Glu79, 130–131 (LA), 155–158 (RGGS), and Ser158 contribute to the substrate site. ATP is bound by residues 178–179 (TD) and 184–189 (MTADPR). Substrate contacts are provided by residues 299–301 (SVD), 355–356 (VT), 369–370 (PI), and 376–377 (SH). The 61-residue stretch at 344–404 (AVGAGIMGVP…ALHEVFELSK (61 aa)) folds into the ACT domain.

This sequence belongs to the aspartokinase family. As to quaternary structure, tetramer consisting of 2 isoforms Alpha (catalytic) and 2 isoforms Beta (function not known).

The enzyme catalyses L-aspartate + ATP = 4-phospho-L-aspartate + ADP. The protein operates within amino-acid biosynthesis; L-lysine biosynthesis via DAP pathway; (S)-tetrahydrodipicolinate from L-aspartate: step 1/4. It functions in the pathway amino-acid biosynthesis; L-methionine biosynthesis via de novo pathway; L-homoserine from L-aspartate: step 1/3. Its pathway is amino-acid biosynthesis; L-threonine biosynthesis; L-threonine from L-aspartate: step 1/5. Its activity is regulated as follows. Diaminopimelate-sensitive. Functionally, catalyzes the phosphorylation of the beta-carboxyl group of aspartic acid with ATP to yield 4-phospho-L-aspartate, which is involved in the branched biosynthetic pathway leading to the biosynthesis of amino acids threonine, isoleucine and methionine. The sequence is that of Aspartokinase 1 (dapG) from Bacillus subtilis (strain 168).